The following is an 80-amino-acid chain: Large ribosomal subunit protein bL31 (80 aa).

Residues Cys-16, Cys-18, Cys-38, and Cys-41 each contribute to the Zn(2+) site.

Belongs to the bacterial ribosomal protein bL31 family. Type A subfamily. Part of the 50S ribosomal subunit. Zn(2+) is required as a cofactor.

Functionally, binds the 23S rRNA. The protein is Large ribosomal subunit protein bL31 of Mycobacterium avium (strain 104).